The following is a 115-amino-acid chain: Large ribosomal subunit protein bL19 (115 aa).

It belongs to the bacterial ribosomal protein bL19 family.

Functionally, this protein is located at the 30S-50S ribosomal subunit interface and may play a role in the structure and function of the aminoacyl-tRNA binding site. This chain is Large ribosomal subunit protein bL19, found in Thermosipho melanesiensis (strain DSM 12029 / CIP 104789 / BI429).